Reading from the N-terminus, the 83-residue chain is Small ribosomal subunit protein bS20 (83 aa).

Belongs to the bacterial ribosomal protein bS20 family.

Its function is as follows. Binds directly to 16S ribosomal RNA. This is Small ribosomal subunit protein bS20 from Flavobacterium psychrophilum (strain ATCC 49511 / DSM 21280 / CIP 103535 / JIP02/86).